Here is a 410-residue protein sequence, read N- to C-terminus: Ribulose bisphosphate carboxylase large chain (410 aa).

Residues asparagine 100 and threonine 150 each contribute to the substrate site. The active-site Proton acceptor is the lysine 152. A substrate-binding site is contributed by lysine 154. Lysine 178, aspartate 180, and glutamate 181 together coordinate Mg(2+). Position 178 is an N6-carboxylysine (lysine 178). The Proton acceptor role is filled by histidine 271. Residues arginine 272, histidine 304, and serine 356 each coordinate substrate.

This sequence belongs to the RuBisCO large chain family. Type I subfamily. In terms of assembly, heterohexadecamer of 8 large chains and 8 small chains; disulfide-linked. The disulfide link is formed within the large subunit homodimers. Mg(2+) serves as cofactor. Post-translationally, the disulfide bond which can form in the large chain dimeric partners within the hexadecamer appears to be associated with oxidative stress and protein turnover.

Its subcellular location is the plastid. It is found in the chloroplast. The catalysed reaction is 2 (2R)-3-phosphoglycerate + 2 H(+) = D-ribulose 1,5-bisphosphate + CO2 + H2O. It catalyses the reaction D-ribulose 1,5-bisphosphate + O2 = 2-phosphoglycolate + (2R)-3-phosphoglycerate + 2 H(+). RuBisCO catalyzes two reactions: the carboxylation of D-ribulose 1,5-bisphosphate, the primary event in carbon dioxide fixation, as well as the oxidative fragmentation of the pentose substrate in the photorespiration process. Both reactions occur simultaneously and in competition at the same active site. This chain is Ribulose bisphosphate carboxylase large chain (rbcL), found in Gleichenia japonica (Urajiro).